A 252-amino-acid polypeptide reads, in one-letter code: 3-dehydroquinate dehydratase (252 aa).

3-dehydroquinate contacts are provided by residues 46-48 (EWR) and arginine 82. Histidine 143 acts as the Proton donor/acceptor in catalysis. Lysine 170 serves as the catalytic Schiff-base intermediate with substrate. 3-dehydroquinate contacts are provided by arginine 212, serine 231, and glutamine 235.

This sequence belongs to the type-I 3-dehydroquinase family. In terms of assembly, homodimer.

The catalysed reaction is 3-dehydroquinate = 3-dehydroshikimate + H2O. The protein operates within metabolic intermediate biosynthesis; chorismate biosynthesis; chorismate from D-erythrose 4-phosphate and phosphoenolpyruvate: step 3/7. In terms of biological role, involved in the third step of the chorismate pathway, which leads to the biosynthesis of aromatic amino acids. Catalyzes the cis-dehydration of 3-dehydroquinate (DHQ) and introduces the first double bond of the aromatic ring to yield 3-dehydroshikimate. The polypeptide is 3-dehydroquinate dehydratase (Listeria monocytogenes serotype 4b (strain F2365)).